The chain runs to 94 residues: uncharacterized protein (94 aa).

The next 2 membrane-spanning stretches (helical) occupy residues 7–24 (IFFI…SFNV) and 39–61 (AVPI…LLFL). The tract at residues 68–94 (TRKQKREDSPTSAPTGGVSSPEHVDVP) is disordered.

The protein resides in the cell membrane. This is an uncharacterized protein from Treponema pallidum (strain Nichols).